Reading from the N-terminus, the 62-residue chain is Large ribosomal subunit protein uL30 (62 aa).

It belongs to the universal ribosomal protein uL30 family. Part of the 50S ribosomal subunit.

This chain is Large ribosomal subunit protein uL30, found in Pseudoalteromonas atlantica (strain T6c / ATCC BAA-1087).